Reading from the N-terminus, the 304-residue chain is N-acetyl-D-glucosamine kinase (304 aa).

ATP-binding positions include Gly4 to Lys11 and Gly133 to Ile140. 4 residues coordinate Zn(2+): His157, Cys177, Cys179, and Cys184.

This sequence belongs to the ROK (NagC/XylR) family. NagK subfamily.

The catalysed reaction is N-acetyl-D-glucosamine + ATP = N-acetyl-D-glucosamine 6-phosphate + ADP + H(+). It functions in the pathway cell wall biogenesis; peptidoglycan recycling. Its function is as follows. Catalyzes the phosphorylation of N-acetyl-D-glucosamine (GlcNAc) derived from cell-wall degradation, yielding GlcNAc-6-P. The sequence is that of N-acetyl-D-glucosamine kinase from Pectobacterium carotovorum subsp. carotovorum (strain PC1).